The sequence spans 421 residues: Na(+)/H(+) antiporter NhaA 1 (421 aa).

11 helical membrane passes run 48–68, 93–113, 129–149, 157–177, 187–207, 215–235, 253–273, 299–319, 326–346, 364–384, and 392–412; these read SSGL…NSPW, LYWW…GLEI, SLAL…YTLV, AGWG…LALL, VLLA…IALF, LALG…AAGV, LASG…IPLG, FLIL…GGSL, VVLG…WLAV, GLGL…GLAF, and AAKL…ITVL.

The protein belongs to the NhaA Na(+)/H(+) (TC 2.A.33) antiporter family.

It localises to the cell membrane. The catalysed reaction is Na(+)(in) + 2 H(+)(out) = Na(+)(out) + 2 H(+)(in). Na(+)/H(+) antiporter that extrudes sodium in exchange for external protons. The chain is Na(+)/H(+) antiporter NhaA 1 from Deinococcus geothermalis (strain DSM 11300 / CIP 105573 / AG-3a).